The chain runs to 528 residues: DEAD-box ATP-dependent RNA helicase 6 (528 aa).

Low complexity-rich tracts occupy residues 1–15 (MNNN…PPGI) and 65–80 (QQYV…QQQQ). The disordered stretch occupies residues 1–80 (MNNNNNNRGR…GYPQQIQQQQ (80 aa)). The Q motif motif lies at 154-182 (NEFEDYFLKRDLLRGIYEKGFEKPSPIQE). The region spanning 185-355 (IPIALTGSDI…DRYLKKPYII (171 aa)) is the Helicase ATP-binding domain. Residue 198–205 (AKNGTGKT) coordinates ATP. At Thr260 the chain carries Phosphothreonine. The DEAD box motif lies at 303 to 306 (DEAD). The Helicase C-terminal domain maps to 365-525 (GVTQYYAFVE…PIPSLIDKAI (161 aa)).

It belongs to the DEAD box helicase family. DDX6/DHH1 subfamily.

The protein localises to the cytoplasm. The protein resides in the P-body. It catalyses the reaction ATP + H2O = ADP + phosphate + H(+). Functionally, ATP-dependent RNA helicase involved in mRNA turnover, and more specifically in mRNA decapping. The polypeptide is DEAD-box ATP-dependent RNA helicase 6 (RH6) (Arabidopsis thaliana (Mouse-ear cress)).